The following is a 688-amino-acid chain: Probable xyloglucan glycosyltransferase 7 (688 aa).

Positions 1–25 (MAPSWWGRSGGGGVGNGGGTPVVVK) are disordered. Residues 8–20 (RSGGGGVGNGGGT) are compositionally biased toward gly residues. Helical transmembrane passes span 121 to 141 (VSLV…LQGW) and 183 to 203 (VALF…CFWI). Residue aspartate 269 is part of the active site. Residues aspartate 328 and aspartate 330 each contribute to the substrate site. The active site involves aspartate 422. 2 helical membrane-spanning segments follow: residues 500 to 520 (LILP…TMFV) and 525 to 545 (LPAW…ILPA). The disordered stretch occupies residues 604-635 (HSKQQRVGSAPNLDALTKEESNPKKDSKKKKH). Residues 619–628 (LTKEESNPKK) show a composition bias toward basic and acidic residues. 2 helical membrane passes run 638-657 (IYRK…ARSL) and 663-683 (IHFY…LDLI).

It belongs to the glycosyltransferase 2 family. Plant cellulose synthase-like C subfamily.

It is found in the golgi apparatus membrane. Functionally, probable beta-1,4-glucan synthase rather involved in the synthesis of the xyloglucan backbone than cellulose. Seems to work simultaneously with xyloglucan 6-xylosyltransferase. Xyloglucan is a noncellulosic polysaccharides of plant cell wall and consists of a glucan backbone substituted by xylose, galactose and fucose. The polypeptide is Probable xyloglucan glycosyltransferase 7 (CSLC7) (Oryza sativa subsp. japonica (Rice)).